A 240-amino-acid polypeptide reads, in one-letter code: Eukaryotic translation initiation factor 3 subunit K (240 aa).

Residues 41–221 enclose the PCI domain; that stretch reads YDKDIVLTIL…TIKTRNIDEK (181 aa).

It belongs to the eIF-3 subunit K family. Component of the eukaryotic translation initiation factor 3 (eIF-3) complex.

It is found in the cytoplasm. In terms of biological role, component of the eukaryotic translation initiation factor 3 (eIF-3) complex, which is involved in protein synthesis of a specialized repertoire of mRNAs and, together with other initiation factors, stimulates binding of mRNA and methionyl-tRNAi to the 40S ribosome. The eIF-3 complex specifically targets and initiates translation of a subset of mRNAs involved in cell proliferation. This Caenorhabditis briggsae protein is Eukaryotic translation initiation factor 3 subunit K.